Reading from the N-terminus, the 152-residue chain is UPF0266 membrane protein PM0830 (152 aa).

The next 3 membrane-spanning stretches (helical) occupy residues 1–21 (MMII…YAFY), 45–65 (KDAL…YTNL), and 66–86 (SSAT…AAFI).

The protein belongs to the UPF0266 family.

It is found in the cell inner membrane. The sequence is that of UPF0266 membrane protein PM0830 from Pasteurella multocida (strain Pm70).